The following is a 136-amino-acid chain: ATP synthase epsilon chain, chloroplastic (136 aa).

Belongs to the ATPase epsilon chain family. In terms of assembly, F-type ATPases have 2 components, CF(1) - the catalytic core - and CF(0) - the membrane proton channel. CF(1) has five subunits: alpha(3), beta(3), gamma(1), delta(1), epsilon(1). CF(0) has three main subunits: a, b and c.

The protein localises to the plastid. It localises to the chloroplast thylakoid membrane. Its function is as follows. Produces ATP from ADP in the presence of a proton gradient across the membrane. The sequence is that of ATP synthase epsilon chain, chloroplastic from Tetradesmus obliquus (Green alga).